The sequence spans 316 residues: MKIFIHLPTWLGDAVMASPALYAIKEHFKNTQFILYGSLVSTALFREFPNSKIIIENKQTRYKQALSLRKELGKIDLSFAFRSAFSSKIILHILKTKQRYFFDKNKHKEEHQVLKYLYFIENSLSIKAHFKDLKLPFKLKFQNPLILKNGKKILGLNPGASFGSAKRWDASYFAKVALNFSQSHEILIFGAGKAEQELCNEIYQILKEQNIKVKNLCNKTTIKTLCQNIAFCDLFITNDSGPMHISTVYKIKTVAIFGPTKFTQTSPWQNQNAKLVHLDLACMPCMQKTCPLKHHKCMKDLKPEKVIEEIKKLSTP.

The protein belongs to the glycosyltransferase 9 family.

The catalysed reaction is an L-alpha-D-Hep-(1-&gt;5)-[alpha-Kdo-(2-&gt;4)]-alpha-Kdo-(2-&gt;6)-lipid A + ADP-L-glycero-beta-D-manno-heptose = an L-alpha-D-Hep-(1-&gt;3)-L-alpha-D-Hep-(1-&gt;5)-[alpha-Kdo-(2-&gt;4)]-alpha-Kdo-(2-&gt;6)-lipid A + ADP + H(+). Its pathway is bacterial outer membrane biogenesis; LOS core biosynthesis. Its function is as follows. Glycosyltransferase involved in the biosynthesis of the core oligosaccharide region of lipooligosaccharide (LOS). Catalyzes the addition of the second heptose unit to the heptosyl-Kdo2-lipid A module. The polypeptide is Lipooligosaccharide heptosyltransferase 2 (Campylobacter jejuni subsp. jejuni serotype O:6 (strain 81116 / NCTC 11828)).